The following is a 200-amino-acid chain: ATP-dependent Clp protease proteolytic subunit (200 aa).

The active-site Nucleophile is the serine 102. Histidine 127 is a catalytic residue.

The protein belongs to the peptidase S14 family. In terms of assembly, fourteen ClpP subunits assemble into 2 heptameric rings which stack back to back to give a disk-like structure with a central cavity, resembling the structure of eukaryotic proteasomes.

It localises to the cytoplasm. The enzyme catalyses Hydrolysis of proteins to small peptides in the presence of ATP and magnesium. alpha-casein is the usual test substrate. In the absence of ATP, only oligopeptides shorter than five residues are hydrolyzed (such as succinyl-Leu-Tyr-|-NHMec, and Leu-Tyr-Leu-|-Tyr-Trp, in which cleavage of the -Tyr-|-Leu- and -Tyr-|-Trp bonds also occurs).. Its function is as follows. Cleaves peptides in various proteins in a process that requires ATP hydrolysis. Has a chymotrypsin-like activity. Plays a major role in the degradation of misfolded proteins. This Dehalococcoides mccartyi (strain ATCC BAA-2266 / KCTC 15142 / 195) (Dehalococcoides ethenogenes (strain 195)) protein is ATP-dependent Clp protease proteolytic subunit.